The sequence spans 134 residues: U35-theraphotoxin-Cg1a (134 aa).

An N-terminal signal peptide occupies residues 1–18 (MLVTLLETFSVVFQVANG). Positions 19–56 (DGNCVPRFQDDVEFCDNYILEAVTEASKMIAPRAREQK) are excised as a propeptide.

In terms of tissue distribution, expressed by the venom gland.

It localises to the secreted. Functionally, probable secreted venom toxin. This Chilobrachys guangxiensis (Chinese earth tiger tarantula) protein is U35-theraphotoxin-Cg1a.